The following is a 454-amino-acid chain: UDP-N-acetylmuramoylalanine--D-glutamate ligase (454 aa).

Residue 115 to 121 (GTNGKTT) coordinates ATP.

This sequence belongs to the MurCDEF family.

It localises to the cytoplasm. It catalyses the reaction UDP-N-acetyl-alpha-D-muramoyl-L-alanine + D-glutamate + ATP = UDP-N-acetyl-alpha-D-muramoyl-L-alanyl-D-glutamate + ADP + phosphate + H(+). It participates in cell wall biogenesis; peptidoglycan biosynthesis. Functionally, cell wall formation. Catalyzes the addition of glutamate to the nucleotide precursor UDP-N-acetylmuramoyl-L-alanine (UMA). The chain is UDP-N-acetylmuramoylalanine--D-glutamate ligase from Thermoanaerobacter pseudethanolicus (strain ATCC 33223 / 39E) (Clostridium thermohydrosulfuricum).